Reading from the N-terminus, the 381-residue chain is Beta-lactamase (381 aa).

Positions 1-20 (MMRKSLCCALLLGISCSALA) are cleaved as a signal peptide. The active-site Acyl-ester intermediate is the S84. Y170 functions as the Proton acceptor in the catalytic mechanism. 335-337 (KTG) provides a ligand contact to substrate.

This sequence belongs to the class-C beta-lactamase family.

The protein resides in the periplasm. It catalyses the reaction a beta-lactam + H2O = a substituted beta-amino acid. In terms of biological role, this protein is a serine beta-lactamase with a substrate specificity for cephalosporins. The chain is Beta-lactamase (ampC) from Enterobacter cloacae.